The sequence spans 441 residues: Ribulose bisphosphate carboxylase large chain (441 aa).

Lysine 5 is modified (N6,N6,N6-trimethyllysine). Substrate contacts are provided by asparagine 114 and threonine 164. Lysine 166 acts as the Proton acceptor in catalysis. Lysine 168 is a binding site for substrate. Mg(2+)-binding residues include lysine 192, aspartate 194, and glutamate 195. N6-carboxylysine is present on lysine 192. Residue histidine 285 is the Proton acceptor of the active site. Positions 286, 318, and 370 each coordinate substrate.

It belongs to the RuBisCO large chain family. Type I subfamily. As to quaternary structure, heterohexadecamer of 8 large chains and 8 small chains; disulfide-linked. The disulfide link is formed within the large subunit homodimers. Mg(2+) is required as a cofactor. Post-translationally, the disulfide bond which can form in the large chain dimeric partners within the hexadecamer appears to be associated with oxidative stress and protein turnover.

It localises to the plastid. The protein localises to the chloroplast. It catalyses the reaction 2 (2R)-3-phosphoglycerate + 2 H(+) = D-ribulose 1,5-bisphosphate + CO2 + H2O. The catalysed reaction is D-ribulose 1,5-bisphosphate + O2 = 2-phosphoglycolate + (2R)-3-phosphoglycerate + 2 H(+). RuBisCO catalyzes two reactions: the carboxylation of D-ribulose 1,5-bisphosphate, the primary event in carbon dioxide fixation, as well as the oxidative fragmentation of the pentose substrate in the photorespiration process. Both reactions occur simultaneously and in competition at the same active site. The protein is Ribulose bisphosphate carboxylase large chain of Begonia metallica x Begonia sanguinea.